A 261-amino-acid polypeptide reads, in one-letter code: MAVQAVHIQGDAFLVCVTHSLSTEREEVMGLCIGEVDTQKVVHIHSVIILRRSDKRKDRVEISPEQLSAATTEADRLAEITGRPMRVVGWYHSHPHITVWPSHVDVRTQAMYQMMDVGFVGLIFSCFIEDKNTKTGRILYTCFQSVQAQKSSEYERIEVPLHVVPHNTIRKVCLESAVELPRILCQEEQDAYRRIHSLGHLDSITKIHNGSVFTKNLCGQMSAISGPLLQWLEDRLEQNQQRAQELQSEKEQLLQELKALG.

Residues 6–149 (VHIQGDAFLV…YTCFQSVQAQ (144 aa)) form the MPN domain. Positions 92, 94, and 105 each coordinate Zn(2+). Residues 92-105 (HSHPHITVWPSHVD) carry the JAMM motif motif.

It belongs to the peptidase M67A family. BRCC36 subfamily. In terms of assembly, component of the BRCA1-A complex, at least composed of brca1, bard1, uimc1/rap80, abraxas1, brcc3/brcc36, babam2 and babam1/nba1. In the BRCA1-A complex, interacts directly with abraxas1 and babam2. Component of the BRISC complex, at least composed of abraxas2, brcc3/brcc36, babam2 and babam1/nba1. Within the complex, interacts directly with abraxas2. Both the BRCA1-A complex and the BRISC complex bind polyubiquitin. Zn(2+) serves as cofactor.

Its subcellular location is the nucleus. It is found in the cytoplasm. It localises to the cytoskeleton. The protein resides in the spindle pole. Functionally, metalloprotease that specifically cleaves 'Lys-63'-linked polyubiquitin chains. Does not have activity toward 'Lys-48'-linked polyubiquitin chains. Component of the BRCA1-A complex, a complex that specifically recognizes 'Lys-63'-linked ubiquitinated histones H2A and H2AX at DNA lesions sites, leading to target the brca1-bard1 heterodimer to sites of DNA damage at double-strand breaks (DSBs). In the BRCA1-A complex, it specifically removes 'Lys-63'-linked ubiquitin on histones H2A and H2AX, antagonizing the rnf8-dependent ubiquitination at double-strand breaks (DSBs). Catalytic subunit of the BRISC complex, a multiprotein complex that specifically cleaves 'Lys-63'-linked ubiquitin in various substrates. Mediates the specific 'Lys-63'-specific deubiquitination associated with the COP9 signalosome complex (CSN), via the interaction of the BRISC complex with the CSN complex. The BRISC complex is required for normal mitotic spindle assembly and microtubule attachment to kinetochores via its role in deubiquitinating numa1. Plays a role in interferon signaling via its role in the deubiquitination of the interferon receptor ifnar1; deubiquitination increases ifnar1 activity by enhancing its stability and cell surface expression. Acts as a regulator of the NLRP3 inflammasome by mediating deubiquitination of nlrp3. Down-regulates the response to bacterial lipopolysaccharide (LPS) via its role in ifnar1 deubiquitination. This chain is Lys-63-specific deubiquitinase BRCC36 (brcc3), found in Xenopus tropicalis (Western clawed frog).